We begin with the raw amino-acid sequence, 202 residues long: Glycerol-3-phosphate acyltransferase (202 aa).

6 helical membrane passes run Met2–Ile22, Phe54–Phe74, Phe85–Phe105, Ala118–Leu138, Leu140–Gly160, and Leu162–Phe182.

This sequence belongs to the PlsY family. In terms of assembly, probably interacts with PlsX.

Its subcellular location is the cell membrane. It carries out the reaction an acyl phosphate + sn-glycerol 3-phosphate = a 1-acyl-sn-glycero-3-phosphate + phosphate. Its pathway is lipid metabolism; phospholipid metabolism. Its function is as follows. Catalyzes the transfer of an acyl group from acyl-phosphate (acyl-PO(4)) to glycerol-3-phosphate (G3P) to form lysophosphatidic acid (LPA). This enzyme utilizes acyl-phosphate as fatty acyl donor, but not acyl-CoA or acyl-ACP. The sequence is that of Glycerol-3-phosphate acyltransferase from Staphylococcus carnosus (strain TM300).